Here is a 284-residue protein sequence, read N- to C-terminus: Proline-rich protein 32 (284 aa).

Disordered regions lie at residues 59–80 (RPPFNVPRTGARIPQNPRAPRH), 97–119 (EINSSEGLESQSQKGHDSINMSQ), and 143–171 (SGNNSKPYIPVPRSQGFFPPRGSQSRGPP).

The chain is Proline-rich protein 32 (Prr32) from Mus musculus (Mouse).